Consider the following 133-residue polypeptide: Large ribosomal subunit protein bL19 (133 aa).

Residues 114–133 are disordered; that stretch reads IAERQMTAASKEEPAEKSEA. Positions 123–133 are enriched in basic and acidic residues; that stretch reads SKEEPAEKSEA.

Belongs to the bacterial ribosomal protein bL19 family.

Its function is as follows. This protein is located at the 30S-50S ribosomal subunit interface and may play a role in the structure and function of the aminoacyl-tRNA binding site. This Phenylobacterium zucineum (strain HLK1) protein is Large ribosomal subunit protein bL19.